The chain runs to 203 residues: dCTP deaminase (203 aa).

DCTP-binding positions include 105-110, D123, 131-133, Q152, Y166, K173, and Q177; these read RSSLGR and TLE. E133 (proton donor/acceptor) is an active-site residue. The segment at 164–203 is disordered; sequence RPYGVERGSKYQDQDGPQASRIGSDPEFHSDENQAAEHES. Positions 166–176 are enriched in basic and acidic residues; the sequence is YGVERGSKYQD. Over residues 187-203 the composition is skewed to basic and acidic residues; sequence SDPEFHSDENQAAEHES.

This sequence belongs to the dCTP deaminase family. In terms of assembly, homotrimer.

It carries out the reaction dCTP + H2O + H(+) = dUTP + NH4(+). Its pathway is pyrimidine metabolism; dUMP biosynthesis; dUMP from dCTP (dUTP route): step 1/2. Catalyzes the deamination of dCTP to dUTP. The protein is dCTP deaminase of Halorubrum lacusprofundi (strain ATCC 49239 / DSM 5036 / JCM 8891 / ACAM 34).